Consider the following 124-residue polypeptide: Large ribosomal subunit protein bL12 (124 aa).

Positions 99-124 are disordered; the sequence is KEGMNKEDAEKAKADLEAAGAKVELK. Over residues 101–114 the composition is skewed to basic and acidic residues; that stretch reads GMNKEDAEKAKADL. Over residues 115-124 the composition is skewed to low complexity; sequence EAAGAKVELK.

It belongs to the bacterial ribosomal protein bL12 family. As to quaternary structure, homodimer. Part of the ribosomal stalk of the 50S ribosomal subunit. Forms a multimeric L10(L12)X complex, where L10 forms an elongated spine to which 2 to 4 L12 dimers bind in a sequential fashion. Binds GTP-bound translation factors.

In terms of biological role, forms part of the ribosomal stalk which helps the ribosome interact with GTP-bound translation factors. Is thus essential for accurate translation. This Campylobacter hominis (strain ATCC BAA-381 / DSM 21671 / CCUG 45161 / LMG 19568 / NCTC 13146 / CH001A) protein is Large ribosomal subunit protein bL12.